A 414-amino-acid polypeptide reads, in one-letter code: Light-independent protochlorophyllide reductase subunit N (414 aa).

[4Fe-4S] cluster-binding residues include Cys-16, Cys-41, and Cys-98.

The protein belongs to the BchN/ChlN family. As to quaternary structure, protochlorophyllide reductase is composed of three subunits; BchL, BchN and BchB. Forms a heterotetramer of two BchB and two BchN subunits. The cofactor is [4Fe-4S] cluster.

It carries out the reaction chlorophyllide a + oxidized 2[4Fe-4S]-[ferredoxin] + 2 ADP + 2 phosphate = protochlorophyllide a + reduced 2[4Fe-4S]-[ferredoxin] + 2 ATP + 2 H2O. It participates in porphyrin-containing compound metabolism; bacteriochlorophyll biosynthesis (light-independent). In terms of biological role, component of the dark-operative protochlorophyllide reductase (DPOR) that uses Mg-ATP and reduced ferredoxin to reduce ring D of protochlorophyllide (Pchlide) to form chlorophyllide a (Chlide). This reaction is light-independent. The NB-protein (BchN-BchB) is the catalytic component of the complex. In Roseiflexus castenholzii (strain DSM 13941 / HLO8), this protein is Light-independent protochlorophyllide reductase subunit N.